A 177-amino-acid chain; its full sequence is Large ribosomal subunit protein uL6 (177 aa).

At K44 the chain carries N6-acetyllysine.

Belongs to the universal ribosomal protein uL6 family. As to quaternary structure, part of the 50S ribosomal subunit.

This protein binds to the 23S rRNA, and is important in its secondary structure. It is located near the subunit interface in the base of the L7/L12 stalk, and near the tRNA binding site of the peptidyltransferase center. This Shigella sonnei (strain Ss046) protein is Large ribosomal subunit protein uL6.